Consider the following 414-residue polypeptide: 11-beta-hydroxysteroid dehydrogenase type 2 (414 aa).

4 consecutive transmembrane segments (helical) span residues 3–23, 26–46, 52–72, and 341–361; these read DFAV…GGAV, FLAF…ATLL, ALCM…WLYF, and YYAG…PLSI. The segment at 382–414 is disordered; the sequence is KQQGLSPNDNNNSIKENMNDSSSNNSNFTKCID. Residues 384-397 are compositionally biased toward polar residues; the sequence is QGLSPNDNNNSIKE.

It belongs to the short-chain dehydrogenases/reductases (SDR) family. Broadly expressed in peripheral (brain, gill, eye, heart, liver, head kidney, posterior kidney, and gut).

It localises to the membrane. The enzyme catalyses an 11beta-hydroxysteroid + NAD(+) = an 11-oxosteroid + NADH + H(+). It carries out the reaction cortisol + NAD(+) = cortisone + NADH + H(+). It catalyses the reaction corticosterone + NAD(+) = 11-dehydrocorticosterone + NADH + H(+). The catalysed reaction is 11beta,17beta-dihydroxyandrost-4-ene-3-one + NAD(+) = 17beta-hydroxyandrost-4-ene-3,11-dione + NADH + H(+). The enzyme catalyses 11beta-hydroxyandrost-4-ene-3,17-dione + NAD(+) = androst-4-ene-3,11,17-trione + NADH + H(+). It participates in steroid metabolism. In terms of biological role, catalyzes the conversion of biologically active 11beta-hydroxyglucocorticoids (11beta-hydroxysteroid) such as cortisol, to inactive 11-ketoglucocorticoids (11-oxosteroid) such as cortisone, in the presence of NAD(+). Cortisol is the primary glucocorticoid in teleosts and is released to increase glucose bioavailability in order to meet the increased energy demands in response to stress. Functions as a dehydrogenase (oxidase), thereby decreasing the concentration of active glucocorticoids, regulating the hypothalamus-pituitary-interrenal (HPI) axis function in adult fish. Decreasing the excess glucocorticoids may be of relevance to brain function and neural proliferation. Plays a key role by catalyzing the oxidation of 11beta-hydroxytestosterone (11beta,17beta-dihydroxyandrost-4-ene-3-one) to 11-ketotestosterone (17beta-hydroxyandrost-4-ene-3,11-dione), the major fish androgen, that activates androgen receptor transcriptional activity. Catalyzes the conversion of 11beta-hydroxyandrostenedione (11beta-hydroxyandrost-4-ene-3,17-dione) to 11-ketoandrostenedione (androst-4-ene-3,11,17-trione), which can be further metabolized to 11-ketotestosterone. Exerts a dual role in fish by inactivating glucocorticoids and activating androgens. In Danio rerio (Zebrafish), this protein is 11-beta-hydroxysteroid dehydrogenase type 2 (hsd11b2).